A 253-amino-acid polypeptide reads, in one-letter code: A-type ATP synthase subunit B (253 aa).

It belongs to the ATPase alpha/beta chains family. As to quaternary structure, has multiple subunits with at least A(3), B(3), C, D, E, F, H, I and proteolipid K(x).

The protein resides in the cell membrane. Component of the A-type ATP synthase that produces ATP from ADP in the presence of a proton gradient across the membrane. The B chain is a regulatory subunit. This chain is A-type ATP synthase subunit B, found in Methanothermococcus thermolithotrophicus (Methanococcus thermolithotrophicus).